We begin with the raw amino-acid sequence, 250 residues long: Sugar fermentation stimulation protein homolog (250 aa).

The protein belongs to the SfsA family.

The protein is Sugar fermentation stimulation protein homolog of Synechococcus sp. (strain CC9311).